The following is a 179-amino-acid chain: Large ribosomal subunit protein uL5 (179 aa).

This sequence belongs to the universal ribosomal protein uL5 family. As to quaternary structure, part of the 50S ribosomal subunit; part of the 5S rRNA/L5/L18/L25 subcomplex. Contacts the 5S rRNA and the P site tRNA. Forms a bridge to the 30S subunit in the 70S ribosome.

In terms of biological role, this is one of the proteins that bind and probably mediate the attachment of the 5S RNA into the large ribosomal subunit, where it forms part of the central protuberance. In the 70S ribosome it contacts protein S13 of the 30S subunit (bridge B1b), connecting the 2 subunits; this bridge is implicated in subunit movement. Contacts the P site tRNA; the 5S rRNA and some of its associated proteins might help stabilize positioning of ribosome-bound tRNAs. This Staphylococcus carnosus (strain TM300) protein is Large ribosomal subunit protein uL5.